Consider the following 564-residue polypeptide: Phosphoinositide phospholipase C 3 (564 aa).

The region spanning 19 to 54 (TRQPPVSIKRLFEAYSRNGKMSFDELLRFVSEVQGE) is the EF-hand domain. The 145-residue stretch at 106 to 250 (HDMKAPLSHY…LKGKILISTK (145 aa)) folds into the PI-PLC X-box domain. Active-site residues include His-121 and His-167. A PI-PLC Y-box domain is found at 296 to 412 (RDLIAIHAAN…GYVKKPRILL (117 aa)). The 134-residue stretch at 406–539 (KKPRILLDEH…KSGVRAVRLH (134 aa)) folds into the C2 domain. Asp-450, Asp-456, Asp-509, Asp-511, and Asp-517 together coordinate Ca(2+).

Ca(2+) serves as cofactor. Expressed in leaves, roots and siliques, but not in flowers.

It is found in the cell membrane. It carries out the reaction a 1,2-diacyl-sn-glycero-3-phospho-(1D-myo-inositol-4,5-bisphosphate) + H2O = 1D-myo-inositol 1,4,5-trisphosphate + a 1,2-diacyl-sn-glycerol + H(+). Its function is as follows. The production of the second messenger molecules diacylglycerol (DAG) and inositol 1,4,5-trisphosphate (IP3) is mediated by activated phosphatidylinositol-specific phospholipase C enzymes. This Arabidopsis thaliana (Mouse-ear cress) protein is Phosphoinositide phospholipase C 3 (PLC3).